The primary structure comprises 309 residues: Dioxygenase af480 (309 aa).

Positions 153, 155, and 228 each coordinate Fe cation.

This sequence belongs to the PhyH family. Requires Fe cation as cofactor.

It carries out the reaction 5-dehydro-6-demethoxyfumagillol + 2-oxoglutarate + O2 = 5-dehydro-6-demethoxy-6-hydroxyfumagillol + succinate + CO2. It functions in the pathway secondary metabolite biosynthesis; terpenoid biosynthesis. Dioxygenase; part of the gene cluster that mediates the biosynthesis of fumagillin, a meroterpenoid that has numerous biological activities including irreversible inhibition of human type 2 methionine aminopeptidase (METAP2). Within the pathway, the dioxygenase af480 acts as a 5-dehydro-6-demethoxyfumagillol dioxygenase that hydroylates 5-keto-demethoxyfumagillol at position C-6. The pathway begins with the conversion of farnesyl pyrophosphate (FPP) to beta-trans-bergamotene by the membrane-bound beta-trans-bergamotene synthase af520. The multifunctional cytochrome P450 monooxygenase af510 then converts beta-trans-bergamotene into 5-keto-demethoxyfumagillol via several oxydation steps. 5-keto-demethoxyfumagillol is then subjected to successive C-6 hydroxylation and O-methylation by the dioxygenase af480 and O-methyltransferase af390-400, respectively, to yield 5-keto-fumagillol, which is then stereoselectively reduced by the keto-reductase af490 to 5R-hydroxy-seco-sesquiterpene. The next step is the polyketide transferase af380-catalyzed transfer of a dodecapentaenoyl group synthesized by the polyketide synthase af370 onto 5R-hydroxy-seco-sesquiterpene which leads to the production of prefumagillin. Finally, oxidative cleavage by the monooxygenase af470 converts prefumagillin to fumagillin. This chain is Dioxygenase af480, found in Aspergillus fumigatus (strain ATCC MYA-4609 / CBS 101355 / FGSC A1100 / Af293) (Neosartorya fumigata).